Reading from the N-terminus, the 273-residue chain is Ribosomal RNA small subunit methyltransferase A (273 aa).

Residues Asn18, Leu20, Gly45, Glu66, Asp91, and Asn113 each contribute to the S-adenosyl-L-methionine site.

It belongs to the class I-like SAM-binding methyltransferase superfamily. rRNA adenine N(6)-methyltransferase family. RsmA subfamily.

The protein localises to the cytoplasm. The catalysed reaction is adenosine(1518)/adenosine(1519) in 16S rRNA + 4 S-adenosyl-L-methionine = N(6)-dimethyladenosine(1518)/N(6)-dimethyladenosine(1519) in 16S rRNA + 4 S-adenosyl-L-homocysteine + 4 H(+). In terms of biological role, specifically dimethylates two adjacent adenosines (A1518 and A1519) in the loop of a conserved hairpin near the 3'-end of 16S rRNA in the 30S particle. May play a critical role in biogenesis of 30S subunits. This is Ribosomal RNA small subunit methyltransferase A from Escherichia coli (strain SE11).